We begin with the raw amino-acid sequence, 609 residues long: D-apionate lactonase (609 aa).

The enzyme catalyses D-apionolactone + H2O = D-apionate + H(+). It functions in the pathway carbohydrate metabolism. In terms of biological role, involved in catabolism of D-apiose. Hydrolyzes D-apionolactone to D-apionate. The sequence is that of D-apionate lactonase from Brucella anthropi (strain ATCC 49188 / DSM 6882 / CCUG 24695 / JCM 21032 / LMG 3331 / NBRC 15819 / NCTC 12168 / Alc 37) (Ochrobactrum anthropi).